We begin with the raw amino-acid sequence, 68 residues long: Large ribosomal subunit protein eL24 (68 aa).

Zn(2+)-binding residues include Cys-7, Cys-10, Cys-33, and Cys-37. A C4-type zinc finger spans residues 7–37; that stretch reads CDFCGRIIEPGTGKMFVKNDGTILWFCSSKC.

Belongs to the eukaryotic ribosomal protein eL24 family. As to quaternary structure, part of the 50S ribosomal subunit. Forms a cluster with proteins L3 and L14. The cofactor is Zn(2+).

Its function is as follows. Binds to the 23S rRNA. The polypeptide is Large ribosomal subunit protein eL24 (Methanopyrus kandleri (strain AV19 / DSM 6324 / JCM 9639 / NBRC 100938)).